The following is a 212-amino-acid chain: Fe/S biogenesis protein NfuA (212 aa).

[4Fe-4S] cluster contacts are provided by C169 and C172.

The protein belongs to the NfuA family. As to quaternary structure, homodimer. The cofactor is [4Fe-4S] cluster.

In terms of biological role, involved in iron-sulfur cluster biogenesis. Binds a 4Fe-4S cluster, can transfer this cluster to apoproteins, and thereby intervenes in the maturation of Fe/S proteins. Could also act as a scaffold/chaperone for damaged Fe/S proteins. The protein is Fe/S biogenesis protein NfuA of Acinetobacter baumannii (strain SDF).